The chain runs to 88 residues: Defensin-like protein 267 (88 aa).

Residues 1–23 (MMLSKVVLLALLLSLSCLWVAKA) form the signal peptide. 3 disulfides stabilise this stretch: cysteine 45–cysteine 63, cysteine 51–cysteine 68, and cysteine 55–cysteine 70.

This sequence belongs to the DEFL family.

Its subcellular location is the secreted. This is Defensin-like protein 267 from Arabidopsis thaliana (Mouse-ear cress).